We begin with the raw amino-acid sequence, 434 residues long: MCPCVERRAPPGVYYTPPPARTSDHVAAMPMTERRRPPYSCSSSSERRDPFHIVHKVPSGDSPYVRAKHAQLIDKDPNRAISLFWTAINAGDRVDSALKDMAVVMKQLGRSDEGIEAIKSFRYLCSFESQDSIDNLLLELYKKSGRIEEEAVLLEHKLQTLEQGMGFGGRVSRAKRVQGKHVIMTIEQEKARILGNLGWVHLQLHNYGIAEQHYRRALGLERDKNKLCNLAICLMRMSRIPEAKSLLDDVRDSPAESECGDEPFAKSYDRAVEMLAEIESKKPEADLSEKFYAGCSFVNRMKENIAPGTANKNYSDVSSSPASVRPNSAGLYTQPRRCRLFEEETRGAARKLLFGKPQPFGSEQMKILERGEEEPMKRKKLDQNMIQYLHEFVKDTADGPKSESKKSWADIAEEEEAEEEEEERLQGELKTAEM.

A disordered region spans residues 13–47 (VYYTPPPARTSDHVAAMPMTERRRPPYSCSSSSER). Positions 34-37 (RRRP) match the Nuclear localization signal 1 motif. TPR repeat units follow at residues 95-131 (DSAL…ESQD), 133-164 (IDNL…LEQG), 191-224 (ARIL…ERDK), and 241-274 (PEAK…AVEM). The stretch at 142 to 166 (KKSGRIEEEAVLLEHKLQTLEQGMG) forms a coiled coil. The tract at residues 309–329 (TANKNYSDVSSSPASVRPNSA) is disordered. A compositionally biased stretch (polar residues) spans 310-326 (ANKNYSDVSSSPASVRP). The short motif at 377-380 (KRKK) is the Nuclear localization signal 2 element. Positions 393–408 (VKDTADGPKSESKKSW) are enriched in basic and acidic residues. Positions 393–434 (VKDTADGPKSESKKSWADIAEEEEAEEEEEERLQGELKTAEM) are disordered. Residues 408–434 (WADIAEEEEAEEEEEERLQGELKTAEM) adopt a coiled-coil conformation. Over residues 411 to 423 (IAEEEEAEEEEEE) the composition is skewed to acidic residues. Over residues 424–434 (RLQGELKTAEM) the composition is skewed to basic and acidic residues.

It belongs to the MS5 protein family. In terms of tissue distribution, expressed at low levels mostly in floral organs during meiosis. Also barely detectable in leaves, stems and roots.

It is found in the nucleus. Its function is as follows. Essential for male fertility, especially for microspore and pollen grain production. Involved in the regulation of cell division after male meiosis I and II to facilitate exit from meiosis and transition to G1. This Arabidopsis thaliana (Mouse-ear cress) protein is Protein POLLENLESS 3.